The following is a 335-amino-acid chain: tRNA N6-adenosine threonylcarbamoyltransferase (335 aa).

A divalent metal cation contacts are provided by H109, H113, and Y130. Residues 130 to 134 (YVSGG), D162, G177, E181, and N266 each bind substrate. Residue D294 participates in a divalent metal cation binding.

The protein belongs to the KAE1 / TsaD family. Component of the EKC/KEOPS complex composed of at least tp53rk, tprkb, osgep and lage3; the whole complex dimerizes. A divalent metal cation is required as a cofactor.

It is found in the cytoplasm. It localises to the nucleus. It catalyses the reaction L-threonylcarbamoyladenylate + adenosine(37) in tRNA = N(6)-L-threonylcarbamoyladenosine(37) in tRNA + AMP + H(+). Component of the EKC/KEOPS complex that is required for the formation of a threonylcarbamoyl group on adenosine at position 37 (t(6)A37) in tRNAs that read codons beginning with adenine. The complex is probably involved in the transfer of the threonylcarbamoyl moiety of threonylcarbamoyl-AMP (TC-AMP) to the N6 group of A37. Osgep likely plays a direct catalytic role in this reaction, but requires other protein(s) of the complex to fulfill this activity. In Xenopus laevis (African clawed frog), this protein is tRNA N6-adenosine threonylcarbamoyltransferase.